The following is a 420-amino-acid chain: Pyridinium-3,5-bisthiocarboxylic acid mononucleotide nickel insertion protein (420 aa).

It belongs to the LarC family.

The enzyme catalyses Ni(II)-pyridinium-3,5-bisthiocarboxylate mononucleotide = pyridinium-3,5-bisthiocarboxylate mononucleotide + Ni(2+). Involved in the biosynthesis of a nickel-pincer cofactor ((SCS)Ni(II) pincer complex). Binds Ni(2+), and functions in nickel delivery to pyridinium-3,5-bisthiocarboxylic acid mononucleotide (P2TMN), to form the mature cofactor. Is required for the activation of the lactate racemase LarA. May also be involved in the activation of other nickel-pincer cofactor-dependent enzymes. This chain is Pyridinium-3,5-bisthiocarboxylic acid mononucleotide nickel insertion protein, found in Lactiplantibacillus plantarum (strain ATCC BAA-793 / NCIMB 8826 / WCFS1) (Lactobacillus plantarum).